We begin with the raw amino-acid sequence, 660 residues long: Cullin-associated NEDD8-dissociated protein 1 homolog (660 aa).

A Glycyl lysine isopeptide (Lys-Gly) (interchain with G-Cter in NEDD8) cross-link involves residue Lys-16. A disordered region spans residues 339 to 364 (TQNENDHGSDNLIDSDDGFGSDNDPE). Acidic residues predominate over residues 351–363 (IDSDDGFGSDNDP).

As to quaternary structure, interacts with unneddylated cullin CDC53. Neddylated at Lys-16.

In terms of biological role, assembly factor of SCF (SKP1-CUL1-F-box protein) E3 ubiquitin ligase complexes that promotes the exchange of the substrate-recognition F-box subunit in SCF complexes, thereby playing a key role in the cellular repertoire of SCF complexes. Acts as a F-box protein exchange factor. Involved in the aging process. Longevity-assurance protein. The chain is Cullin-associated NEDD8-dissociated protein 1 homolog (LAG2) from Saccharomyces cerevisiae (strain ATCC 204508 / S288c) (Baker's yeast).